The following is a 241-amino-acid chain: Peptidoglycan endopeptidase RipB (241 aa).

A signal peptide spans 1–31; it reads MRHTRFHPIKLAWITAVVAGLMVGVATPADA. Positions 109-241 constitute a NlpC/P60 domain; the sequence is RQAVEYVIRR…TPFVTRIIEY (133 aa). Cysteine 152 acts as the Nucleophile in catalysis. Histidine 201 serves as the catalytic Proton acceptor. Glutamate 213 is a catalytic residue.

Belongs to the peptidase C40 family. Monomer.

Peptidoglycan endopeptidase that cleaves the bond between D-glutamate and meso-diaminopimelate. Binds high-molecular weight peptidoglycan, but does not degrade it. Required for normal separation of daughter cells after cell division and cell wall integrity. Required for host cell invasion. The chain is Peptidoglycan endopeptidase RipB (ripB) from Mycobacterium tuberculosis (strain CDC 1551 / Oshkosh).